A 165-amino-acid polypeptide reads, in one-letter code: Large ribosomal subunit protein uL10 (165 aa).

This sequence belongs to the universal ribosomal protein uL10 family. In terms of assembly, part of the ribosomal stalk of the 50S ribosomal subunit. The N-terminus interacts with L11 and the large rRNA to form the base of the stalk. The C-terminus forms an elongated spine to which L12 dimers bind in a sequential fashion forming a multimeric L10(L12)X complex.

Functionally, forms part of the ribosomal stalk, playing a central role in the interaction of the ribosome with GTP-bound translation factors. This chain is Large ribosomal subunit protein uL10, found in Citrobacter koseri (strain ATCC BAA-895 / CDC 4225-83 / SGSC4696).